The sequence spans 492 residues: N-succinylglutamate 5-semialdehyde dehydrogenase (492 aa).

An NAD(+)-binding site is contributed by 220-225; it reads GSANTG. Active-site residues include E243 and C277.

Belongs to the aldehyde dehydrogenase family. AstD subfamily.

The enzyme catalyses N-succinyl-L-glutamate 5-semialdehyde + NAD(+) + H2O = N-succinyl-L-glutamate + NADH + 2 H(+). It participates in amino-acid degradation; L-arginine degradation via AST pathway; L-glutamate and succinate from L-arginine: step 4/5. Catalyzes the NAD-dependent reduction of succinylglutamate semialdehyde into succinylglutamate. In Escherichia coli (strain ATCC 8739 / DSM 1576 / NBRC 3972 / NCIMB 8545 / WDCM 00012 / Crooks), this protein is N-succinylglutamate 5-semialdehyde dehydrogenase.